We begin with the raw amino-acid sequence, 148 residues long: Lysozyme C (148 aa).

The signal sequence occupies residues 1-18; that stretch reads MRALIILGLVLLSVTVQG. A C-type lysozyme domain is found at 19–148; it reads KIFERCELAR…VSQYVKGCGV (130 aa). Cystine bridges form between Cys24/Cys146, Cys48/Cys134, Cys83/Cys99, and Cys95/Cys113. Active-site residues include Glu53 and Asp71.

It belongs to the glycosyl hydrolase 22 family. In terms of assembly, monomer.

The protein resides in the secreted. It carries out the reaction Hydrolysis of (1-&gt;4)-beta-linkages between N-acetylmuramic acid and N-acetyl-D-glucosamine residues in a peptidoglycan and between N-acetyl-D-glucosamine residues in chitodextrins.. Lysozymes have primarily a bacteriolytic function; those in tissues and body fluids are associated with the monocyte-macrophage system and enhance the activity of immunoagents. Also plays a role in digestion in this species. This Trachypithecus francoisi (Francois' leaf monkey) protein is Lysozyme C (LYZ).